A 612-amino-acid polypeptide reads, in one-letter code: Membrane protein insertase YidC (612 aa).

The next 7 membrane-spanning stretches (helical) occupy residues 4-24 (NTII…YLNH), 329-349 (LVPL…IPIF), 358-378 (VNLG…LFPL), 434-454 (ILLQ…AIGL), 484-504 (FLGN…ILNT), 524-544 (LTMY…PAGL), and 546-566 (YYYL…RGLV).

It belongs to the OXA1/ALB3/YidC family. Type 1 subfamily. As to quaternary structure, interacts with the Sec translocase complex via SecD. Specifically interacts with transmembrane segments of nascent integral membrane proteins during membrane integration.

It localises to the cell inner membrane. Its function is as follows. Required for the insertion and/or proper folding and/or complex formation of integral membrane proteins into the membrane. Involved in integration of membrane proteins that insert both dependently and independently of the Sec translocase complex, as well as at least some lipoproteins. Aids folding of multispanning membrane proteins. The polypeptide is Membrane protein insertase YidC (Azobacteroides pseudotrichonymphae genomovar. CFP2).